The chain runs to 428 residues: Enolase (428 aa).

Residue Q164 coordinates (2R)-2-phosphoglycerate. E206 (proton donor) is an active-site residue. 3 residues coordinate Mg(2+): D243, E286, and D313. Residues K338, R367, S368, and K389 each coordinate (2R)-2-phosphoglycerate. K338 functions as the Proton acceptor in the catalytic mechanism.

Belongs to the enolase family. It depends on Mg(2+) as a cofactor.

It is found in the cytoplasm. The protein resides in the secreted. It localises to the cell surface. It carries out the reaction (2R)-2-phosphoglycerate = phosphoenolpyruvate + H2O. Its pathway is carbohydrate degradation; glycolysis; pyruvate from D-glyceraldehyde 3-phosphate: step 4/5. Catalyzes the reversible conversion of 2-phosphoglycerate (2-PG) into phosphoenolpyruvate (PEP). It is essential for the degradation of carbohydrates via glycolysis. In Dehalococcoides mccartyi (strain ATCC BAA-2100 / JCM 16839 / KCTC 5957 / BAV1), this protein is Enolase.